Reading from the N-terminus, the 313-residue chain is Olfactory receptor 8B3 (313 aa).

Over 1–25 (MLARNNSLVTEFILAGLTDHPEFQQ) the chain is Extracellular. The N-linked (GlcNAc...) asparagine glycan is linked to Asn5. The chain crosses the membrane as a helical span at residues 26–46 (PLFFLFLVVYIVTMVGNLGLI). At 47-54 (ILFGLNSH) the chain is on the cytoplasmic side. The chain crosses the membrane as a helical span at residues 55-75 (LHTPMYYFLFNLSFIDLCYSS). At 76–99 (VFTPKMLMNFVSKKNIISYVGCMT) the chain is on the extracellular side. Cys97 and Cys189 are joined by a disulfide. The chain crosses the membrane as a helical span at residues 100–120 (QLFFFLFFVISECYMLTSMAY). Topologically, residues 121–139 (DRYVAICNPLLYKVTMSHQ) are cytoplasmic. A helical transmembrane segment spans residues 140–160 (VCSMLTFAAYIMGLAGATAHT). The Extracellular segment spans residues 161-197 (GCMLRLTFCSANIINHYLCDILPLLQLSCTSTYVNEV). A helical membrane pass occupies residues 198 to 217 (VVLIVVGINIMVPSCTILIS). The Cytoplasmic portion of the chain corresponds to 218-237 (YVFIVTSILHIKSTQGRSKA). Residues 238-258 (FSTCSSHVIALSLFFGSAAFM) traverse the membrane as a helical segment. At 259 to 270 (YIKYSSGSMEQG) the chain is on the extracellular side. A helical transmembrane segment spans residues 271-291 (KVSSVFYTNVVPMLNPLIYSL). Residues 292 to 313 (RNKDVKVALRKALIKIQRRNIF) are Cytoplasmic-facing.

The protein belongs to the G-protein coupled receptor 1 family.

The protein resides in the cell membrane. Functionally, odorant receptor. This Homo sapiens (Human) protein is Olfactory receptor 8B3 (OR8B3).